The primary structure comprises 211 residues: LexA repressor (211 aa).

The segment at residues arginine 30–lysine 50 is a DNA-binding region (H-T-H motif). Active-site for autocatalytic cleavage activity residues include serine 128 and lysine 165.

It belongs to the peptidase S24 family. As to quaternary structure, homodimer.

It catalyses the reaction Hydrolysis of Ala-|-Gly bond in repressor LexA.. In terms of biological role, represses a number of genes involved in the response to DNA damage (SOS response), including recA and lexA. In the presence of single-stranded DNA, RecA interacts with LexA causing an autocatalytic cleavage which disrupts the DNA-binding part of LexA, leading to derepression of the SOS regulon and eventually DNA repair. The sequence is that of LexA repressor from Haemophilus ducreyi (strain 35000HP / ATCC 700724).